A 622-amino-acid polypeptide reads, in one-letter code: Serine/threonine-protein kinase MAK (622 aa).

One can recognise a Protein kinase domain in the interval Tyr-4–Phe-284. ATP is bound by residues Leu-10 to Val-18 and Lys-33. Asp-125 functions as the Proton acceptor in the catalytic mechanism. Thr-157 bears the Phosphothreonine; by autocatalysis mark. Tyr-159 is modified (phosphotyrosine; by autocatalysis). A disordered region spans residues Gln-301 to Pro-373.

The protein belongs to the protein kinase superfamily. CMGC Ser/Thr protein kinase family. CDC2/CDKX subfamily. As to quaternary structure, interacts with RP1. Interacts with AR and CDK20. Found in a complex containing MAK, AR and NCOA3. Interacts with FZR1 (via WD repeats). Requires Mg(2+) as cofactor. In terms of processing, autophosphorylated. Phosphorylated on serine and threonine residues. Expressed mainly in testicular cells at and after meiosis.

The protein resides in the nucleus. The protein localises to the cytoplasm. It is found in the cytoskeleton. It localises to the microtubule organizing center. Its subcellular location is the centrosome. The protein resides in the spindle. The protein localises to the midbody. It is found in the cell projection. It localises to the cilium. Its subcellular location is the photoreceptor outer segment. The protein resides in the photoreceptor inner segment. It catalyses the reaction L-seryl-[protein] + ATP = O-phospho-L-seryl-[protein] + ADP + H(+). The catalysed reaction is L-threonyl-[protein] + ATP = O-phospho-L-threonyl-[protein] + ADP + H(+). In terms of biological role, essential for the regulation of ciliary length and required for the long-term survival of photoreceptors. Could play an important function in spermatogenesis. Phosphorylates FZR1 in a cell cycle-dependent manner. Plays a role in the transcriptional coactivation of AR. The protein is Serine/threonine-protein kinase MAK (Mak) of Rattus norvegicus (Rat).